The sequence spans 271 residues: NH(3)-dependent NAD(+) synthetase (271 aa).

43–50 (GISGGQDS) is an ATP binding site. Aspartate 49 is a binding site for Mg(2+). Arginine 136 lines the deamido-NAD(+) pocket. Residue threonine 156 participates in ATP binding. Glutamate 161 lines the Mg(2+) pocket. The deamido-NAD(+) site is built by lysine 169 and aspartate 176. ATP-binding residues include lysine 185 and threonine 207. Residue 256-257 (HK) coordinates deamido-NAD(+).

The protein belongs to the NAD synthetase family. As to quaternary structure, homodimer.

It carries out the reaction deamido-NAD(+) + NH4(+) + ATP = AMP + diphosphate + NAD(+) + H(+). It functions in the pathway cofactor biosynthesis; NAD(+) biosynthesis; NAD(+) from deamido-NAD(+) (ammonia route): step 1/1. Functionally, catalyzes the ATP-dependent amidation of deamido-NAD to form NAD. Uses ammonia as a nitrogen source. This Tropheryma whipplei (strain TW08/27) (Whipple's bacillus) protein is NH(3)-dependent NAD(+) synthetase.